A 579-amino-acid chain; its full sequence is Laccase (579 aa).

The tat-type signal signal peptide spans 1–31 (MTDWSRRRFLQTGAALGIAGTLPQTTTEVSA). The region spanning 82–214 (WGFDGSYPGP…AGLLGLYSIT (133 aa)) is the Plastocyanin-like 1 domain. Cu cation is bound by residues histidine 145, histidine 147, histidine 192, and histidine 194. Residues 372-401 (VSDPSTPPEDASADPTSLSLPTPASYDESD) are disordered. In terms of domain architecture, Plastocyanin-like 2 spans 423–530 (LNGHVFGDED…NKMMIPFVVE (108 aa)). N-linked (GlcNAc...) asparagine glycosylation is present at asparagine 449. 8 residues coordinate Cu cation: histidine 455, histidine 458, histidine 460, histidine 512, cysteine 513, histidine 514, histidine 518, and methionine 523. An N-linked (GlcNAc...) asparagine glycan is attached at asparagine 557.

This sequence belongs to the multicopper oxidase family. Cu(2+) serves as cofactor. In terms of processing, exported by the Tat system. Glycosylated.

The protein localises to the secreted. The enzyme catalyses 4 hydroquinone + O2 = 4 benzosemiquinone + 2 H2O. Inhibited by 1 mM NaN(3), 10 mM thiourea, 10 mM 1,10-phenanthroline, 0.1 mM DL-dithiothreitol (DTT) and 1 mM L-cysteine. The inhibition by DTT and L-cysteine is likely caused by reduction of the oxidized substrate and not by inhibition of the enzyme. Functionally, catalyzes the oxidation of a wide variety of organic substrates, including bilirubin, syringaldazine (SGZ), 2,2'-azino-di-(3-ethylbenzothiazoline)-6-sulfonic acid (ABTS) and dimethoxyphenol (DMP). No oxidation of Fe(2+) or guaiacol. This is Laccase (lccA) from Haloferax volcanii (strain ATCC 29605 / DSM 3757 / JCM 8879 / NBRC 14742 / NCIMB 2012 / VKM B-1768 / DS2) (Halobacterium volcanii).